The sequence spans 642 residues: Threonine--tRNA ligase (642 aa).

The 61-residue stretch at 1–61 (MPVITLPDGS…ETDAELSIIT (61 aa)) folds into the TGS domain. The tract at residues 243–534 (DHRKIGKQLD…LIEEYAGRFP (292 aa)) is catalytic. Zn(2+) contacts are provided by Cys334, His385, and His511.

This sequence belongs to the class-II aminoacyl-tRNA synthetase family. Homodimer. It depends on Zn(2+) as a cofactor.

The protein localises to the cytoplasm. It catalyses the reaction tRNA(Thr) + L-threonine + ATP = L-threonyl-tRNA(Thr) + AMP + diphosphate + H(+). Its function is as follows. Catalyzes the attachment of threonine to tRNA(Thr) in a two-step reaction: L-threonine is first activated by ATP to form Thr-AMP and then transferred to the acceptor end of tRNA(Thr). Also edits incorrectly charged L-seryl-tRNA(Thr). This is Threonine--tRNA ligase from Shewanella baltica (strain OS155 / ATCC BAA-1091).